The following is a 755-amino-acid chain: Ribosome biogenesis protein BOP1 (755 aa).

2 stretches are compositionally biased toward polar residues: residues 1–10 and 43–61; these read MSQEPSSSFS and ELSS…TEPN. The interval 1 to 65 is disordered; sequence MSQEPSSSFS…PLTEPNNIPI (65 aa). Positions 309 to 754 are interaction with EB1; the sequence is MDSMLPTLPN…SGTDGVLRLF (446 aa). Residues 335-374 form a WD 1 repeat; it reads TGTRRINGLTFSPKGMFFAVGGRDCILRVFETYSGRQVRA. The disordered stretch occupies residues 482–505; that stretch reads YNEGSEDDDAAESARFNEERHQRG. Residues 496–505 show a composition bias toward basic and acidic residues; that stretch reads RFNEERHQRG. WD repeat units follow at residues 617–655, 659–698, and 725–755; these read PGVK…EPTA, YHTS…LVKM, and DGSV…RLFK.

Belongs to the WD repeat BOP1/ERB1 family. As to quaternary structure, interacts (via C-terminal WD repeats) with giardin subunit beta. Interacts (via C-terminal WD repeats) with EB1.

Its subcellular location is the nucleus. It localises to the nucleolus. The protein localises to the nucleus membrane. Functionally, required for maturation of ribosomal RNAs and formation of the large ribosomal subunit. This Giardia intestinalis (Giardia lamblia) protein is Ribosome biogenesis protein BOP1.